The primary structure comprises 98 residues: Ferredoxin-like protein (98 aa).

The 31-residue stretch at 57–87 (GQVEVTADGCMECGTCRVLCEANGDVEWSYP) folds into the 4Fe-4S ferredoxin-type domain.

It to ferredoxins from P.putida and C.tartarivorum, ferredoxin I from A.vinelandii, ferredoxin II from D.desulfuricans.

Functionally, could be a 3Fe-4S cluster-containing protein. In Rhizobium meliloti (strain 1021) (Ensifer meliloti), this protein is Ferredoxin-like protein (fixX).